The sequence spans 246 residues: Hydroxyacylglutathione hydrolase (246 aa).

Zn(2+)-binding residues include His-58, His-60, Asp-62, His-63, His-117, Asp-137, and His-175.

The protein belongs to the metallo-beta-lactamase superfamily. Glyoxalase II family. Monomer. The cofactor is Zn(2+).

The enzyme catalyses an S-(2-hydroxyacyl)glutathione + H2O = a 2-hydroxy carboxylate + glutathione + H(+). It participates in secondary metabolite metabolism; methylglyoxal degradation; (R)-lactate from methylglyoxal: step 2/2. Its function is as follows. Thiolesterase that catalyzes the hydrolysis of S-D-lactoyl-glutathione to form glutathione and D-lactic acid. This is Hydroxyacylglutathione hydrolase from Prochlorococcus marinus (strain MIT 9301).